Here is a 327-residue protein sequence, read N- to C-terminus: Deoxyribonuclease (327 aa).

The or 35 signal peptide spans 1 to 24; that stretch reads MSKKLRNFLVRIIVAAFASFAVMA. A disordered region spans residues 299 to 327; the sequence is DSTTDEIENSVDDSEEIVYNDTTTEEEEN.

It carries out the reaction Endonucleolytic cleavage to 5'-phosphodinucleotide and 5'-phosphooligonucleotide end-products.. In terms of biological role, may have a role in S.equisimilis virulence. In Streptococcus dysgalactiae subsp. equisimilis (Streptococcus equisimilis), this protein is Deoxyribonuclease (sdc).